Consider the following 665-residue polypeptide: Intraflagellar transport protein 70B (665 aa).

TPR repeat units follow at residues 11–44 (DGEFTAVVYRLIRNARYAEAVQLLGGELQRSPRS), 45–78 (RAGLSLLGYCYYRLQEFALAAECYEQLGQLHPEL), 154–187 (TDGQINLGCLLYKEGQYEAACSKFFAALQASGYQ), 189–221 (DLSYNLALAYYSSRQYASALKHIAEIIERGIRQ), 393–424 (LTIQVQEARHNRDDEAIKKAVNEYDETMEKYI), 425–457 (PVLMAQAKIYWNLENYPMVEKIFRKSVEFCNDH), and 459–492 (VWKLNVAHVLFMQENKYKEAIGFYEPIVKKHYDN). A disordered region spans residues 130–154 (PGSRSLVEQLPSREGGEESGGENET). Residues 508 to 535 (YIMTSQNEEAEELMRKIEKEEEQLSYDD) are a coiled coil. Residues 544–577 (CIVNLVIGTLYCAKGNYDFGISRVIKSLEPYNKK) form a TPR 8 repeat.

This sequence belongs to the TTC30/dfy-1/fleer family. As to quaternary structure, interacts with the IFT B complex components IFT27, IFT46, IFT74, IFT52, IFT57, IFT80, IFT81 and IFT88. Interacts with KIF17.

Its subcellular location is the cell projection. The protein resides in the cilium. Functionally, required for polyglutamylation of axonemal tubulin. Plays a role in anterograde intraflagellar transport (IFT), the process by which cilia precursors are transported from the base of the cilium to the site of their incorporation at the tip. This is Intraflagellar transport protein 70B from Homo sapiens (Human).